A 450-amino-acid chain; its full sequence is UDP-N-acetylmuramoylalanine--D-glutamate ligase (450 aa).

119 to 125 is a binding site for ATP; sequence GSNGKTT.

This sequence belongs to the MurCDEF family.

It localises to the cytoplasm. The catalysed reaction is UDP-N-acetyl-alpha-D-muramoyl-L-alanine + D-glutamate + ATP = UDP-N-acetyl-alpha-D-muramoyl-L-alanyl-D-glutamate + ADP + phosphate + H(+). Its pathway is cell wall biogenesis; peptidoglycan biosynthesis. Cell wall formation. Catalyzes the addition of glutamate to the nucleotide precursor UDP-N-acetylmuramoyl-L-alanine (UMA). The sequence is that of UDP-N-acetylmuramoylalanine--D-glutamate ligase from Streptococcus pneumoniae (strain P1031).